A 184-amino-acid chain; its full sequence is Photosystem I assembly protein Ycf4 (184 aa).

The next 2 helical transmembrane spans lie at 22 to 42 and 57 to 77; these read FCWA…GTSS and ILFF…LFIS.

This sequence belongs to the Ycf4 family.

It is found in the plastid. It localises to the chloroplast thylakoid membrane. Functionally, seems to be required for the assembly of the photosystem I complex. The protein is Photosystem I assembly protein Ycf4 of Phalaenopsis aphrodite subsp. formosana (Moth orchid).